Reading from the N-terminus, the 595-residue chain is Aspartate--tRNA(Asp/Asn) ligase (595 aa).

Glu-178 lines the L-aspartate pocket. The interval 202-205 is aspartate; sequence QLFK. Arg-224 is an L-aspartate binding site. ATP-binding positions include 224-226 and Gln-233; that span reads RDE. L-aspartate is bound at residue His-458. ATP is bound at residue Glu-488. Arg-495 contacts L-aspartate. 540–543 provides a ligand contact to ATP; that stretch reads GLDR.

This sequence belongs to the class-II aminoacyl-tRNA synthetase family. Type 1 subfamily. In terms of assembly, homodimer.

It is found in the cytoplasm. The catalysed reaction is tRNA(Asx) + L-aspartate + ATP = L-aspartyl-tRNA(Asx) + AMP + diphosphate. Functionally, aspartyl-tRNA synthetase with relaxed tRNA specificity since it is able to aspartylate not only its cognate tRNA(Asp) but also tRNA(Asn). Reaction proceeds in two steps: L-aspartate is first activated by ATP to form Asp-AMP and then transferred to the acceptor end of tRNA(Asp/Asn). The sequence is that of Aspartate--tRNA(Asp/Asn) ligase from Trichodesmium erythraeum (strain IMS101).